The sequence spans 156 residues: MISWTKAFTKPLKGRIFMPNLFVYGTLREGENNHKYMKEATLLSRKASIAGSLVDTGNGYPGLLLENQLVAGEWYEVSEETLKRIDELEEYFGPGDTRNLFDRIECQVNESGGTHLGWTYVYNRDDYLETRFSDWKQYRLQHASGIEEKQDVPHSL.

24–27 (YGTL) serves as a coordination point for substrate. The active-site Proton acceptor is the Glu89.

It belongs to the gamma-glutamylcyclotransferase family.

The enzyme catalyses gamma-L-glutamyl-butirosin B = butirosin B + 5-oxo-L-proline. Its pathway is antibiotic biosynthesis; butirosin biosynthesis. Its function is as follows. Cyclotransferase that catalyzes the last step in the biosynthesis of the aminoglycoside antibiotic butirosin B. Cleaves the amide bond via transamidation using the alpha-amine of the terminal gamma-L-glutamate of the side chain, releasing it as the cyclic 5-oxoproline. The chain is Gamma-L-glutamyl-butirosin B gamma-glutamyl cyclotransferase (btrG) from Niallia circulans (Bacillus circulans).